The chain runs to 91 residues: UPF0335 protein BBta_6866 (91 aa).

It belongs to the UPF0335 family.

This chain is UPF0335 protein BBta_6866, found in Bradyrhizobium sp. (strain BTAi1 / ATCC BAA-1182).